Here is a 484-residue protein sequence, read N- to C-terminus: UDP-N-acetylmuramate--L-alanine ligase (484 aa).

G125–T131 is a binding site for ATP.

It belongs to the MurCDEF family.

The protein resides in the cytoplasm. It catalyses the reaction UDP-N-acetyl-alpha-D-muramate + L-alanine + ATP = UDP-N-acetyl-alpha-D-muramoyl-L-alanine + ADP + phosphate + H(+). It functions in the pathway cell wall biogenesis; peptidoglycan biosynthesis. Cell wall formation. This is UDP-N-acetylmuramate--L-alanine ligase from Buchnera aphidicola subsp. Acyrthosiphon pisum (strain Tuc7).